Here is a 583-residue protein sequence, read N- to C-terminus: MRTHFCGLVDETLIGQTVTLAGWTDVARNQGGVCFIDLRDHEGIVQVTVEVDNAEVFAVAASLGYEDVLQVEGVVRARHAVNDKMRTGKVEVIATAITVLNKAAPLPFHAHENPGEETRLKYRYLDLRRPEMQRMQRTRIKLVQALRRHLDEKGFQDIETPILTKATPEGARDFLVPARMHPGEFYALPQSPQLFKQILMVAGFDRYYQIARCFRDEALRADRQLEFTQLDMEFAFVRERDVQDFVEDMIRAIFKEVVDVQLDASFPRMTWAEAMRRYGSDKPDLRIALELVDVAELVKDSEFPVFTGPANDAEGRVAALRIPGGASLSRKQIDEYAAHAAKYGAKGLAYIKIADNGEISSPIQKFFSEASFAALVAHVGAGNGDIVFFGAGGYNKVSDFMGALRLKAGKDFGLVADGWAPLWVTDFPMFEWDEEEQRYVALHHPFTAPAVDDIADLRANARTAVSRGYDMVLNGNEIGGGSIRIHRPDMQSAVFELLGIGAEEARAKFGFLLDALNYGAPPHGGIAFGIDRIAALMAGTESIRDVIPFPKTTGAQDLMTDAPSPIVDAQLAEVHIQVRPKTN.

Position 169 (Glu-169) interacts with L-aspartate. The interval 193 to 196 (QLFK) is aspartate. L-aspartate is bound at residue Arg-215. Residues 215–217 (RDE) and Gln-224 contribute to the ATP site. Position 443 (His-443) interacts with L-aspartate. Position 477 (Glu-477) interacts with ATP. Arg-484 contacts L-aspartate. 529–532 (GIDR) serves as a coordination point for ATP.

Belongs to the class-II aminoacyl-tRNA synthetase family. Type 1 subfamily. In terms of assembly, homodimer.

It localises to the cytoplasm. The enzyme catalyses tRNA(Asp) + L-aspartate + ATP = L-aspartyl-tRNA(Asp) + AMP + diphosphate. In terms of biological role, catalyzes the attachment of L-aspartate to tRNA(Asp) in a two-step reaction: L-aspartate is first activated by ATP to form Asp-AMP and then transferred to the acceptor end of tRNA(Asp). This is Aspartate--tRNA ligase from Stenotrophomonas maltophilia (strain K279a).